The sequence spans 686 residues: Calponin homology and LIM domain-containing protein (686 aa).

One can recognise a Calponin-homology (CH) domain in the interval 15–120 (ELALDESRDW…ITLYWLGRAA (106 aa)). LIM zinc-binding domains are found at residues 139 to 200 (MNCS…ATNL) and 219 to 279 (NKCS…SCGK). Basic and acidic residues predominate over residues 305–314 (KQVMDKDGHD). Residues 305–345 (KQVMDKDGHDHHHHNHNKPTTTTTTTNSNSPLAKKKSDSCK) form a disordered region. The span at 322 to 333 (KPTTTTTTTNSN) shows a compositional bias: low complexity. LIM zinc-binding domains follow at residues 373–435 (GTCG…NNKS), 437–495 (KNCH…LNQY), 519–579 (DRCV…IQQS), and 583–658 (DHCA…ASSS).

As to quaternary structure, interacts with limF and rab21.

Involved in the regulation of phagocytosis. May repress rab21. This chain is Calponin homology and LIM domain-containing protein (ChLim), found in Dictyostelium discoideum (Social amoeba).